A 52-amino-acid chain; its full sequence is Ovomucoid (52 aa).

The Kazal-like domain maps to 2 to 52 (VDCSDYPKPVCTLEEMPLCGSDNKTYGNKCNFCNAVVDSNGTLTLSHFGKC). Cystine bridges form between Cys-4/Cys-34, Cys-12/Cys-31, and Cys-20/Cys-52. Asn-41 is a glycosylation site (N-linked (GlcNAc...) asparagine).

Its subcellular location is the secreted. This chain is Ovomucoid, found in Scythrops novaehollandiae (Channel-billed cuckoo).